Consider the following 451-residue polypeptide: Spermidine sinapoyl-CoA acyltransferase (451 aa).

Positions 47, 169, 294, 316, and 378 each coordinate spermidine. The active-site Proton acceptor is the H169. D391 acts as the Proton acceptor in catalysis.

The protein belongs to the plant acyltransferase family. As to quaternary structure, monomer. As to expression, predominantly expressed in siliques, especially in seeds around the embryo, and, at low levels, in flowers. Barely detectable in stems, leaves, and roots.

The enzyme catalyses 2 (E)-sinapoyl-CoA + spermidine = N(1),N(8)-bis[(E)-sinapoyl]-spermidine + 2 CoA + 2 H(+). The protein operates within amine and polyamine metabolism; spermidine metabolism. Spermidine sinapoyl-CoA acyltransferase that mediates the accumulation of disinapoyl spermidine conjugates in seeds. Catalyzes the two conjugating steps required for the biosynthesis of N1,N8-disipanoyl-spermidine. Can also use putrescine as an acyl acceptor to convert it into monosinapoyl-putrescine. The chain is Spermidine sinapoyl-CoA acyltransferase from Arabidopsis thaliana (Mouse-ear cress).